A 215-amino-acid chain; its full sequence is Probable transaldolase (215 aa).

Lysine 83 functions as the Schiff-base intermediate with substrate in the catalytic mechanism.

The protein belongs to the transaldolase family. Type 3B subfamily.

It localises to the cytoplasm. The enzyme catalyses D-sedoheptulose 7-phosphate + D-glyceraldehyde 3-phosphate = D-erythrose 4-phosphate + beta-D-fructose 6-phosphate. It functions in the pathway carbohydrate degradation; pentose phosphate pathway; D-glyceraldehyde 3-phosphate and beta-D-fructose 6-phosphate from D-ribose 5-phosphate and D-xylulose 5-phosphate (non-oxidative stage): step 2/3. Functionally, transaldolase is important for the balance of metabolites in the pentose-phosphate pathway. This is Probable transaldolase from Clostridium perfringens (strain 13 / Type A).